The sequence spans 942 residues: Protein O-mannosyl-transferase TMTC1 (942 aa).

The Cytoplasmic segment spans residues 1-20 (MLVTRGDRGGGERAPSRRPR). Residues 21-41 (CGLVPAGAAALLAGASCLCYG) form a helical membrane-spanning segment. The Extracellular portion of the chain corresponds to 42-109 (RSLRGEFVHD…RLNIFLTGMN (68 aa)). The helical transmembrane segment at 110–130 (PFYFHAVNVILHCLVTLVLMY) threads the bilayer. Residues 131–140 (TCDKTVFKNR) are Cytoplasmic-facing. A helical transmembrane segment spans residues 141 to 157 (GLAFVTALLFAVHPVHT). Residues 158–159 (EA) lie on the Extracellular side of the membrane. Residues 160 to 180 (VAGIVGRADVLACLLFLLAFL) traverse the membrane as a helical segment. The Cytoplasmic segment spans residues 181–196 (SYQRSLDQGCAGQCFP). The helical transmembrane segment at 197–217 (TTASPFFLLLSLFLGTCAMLV) threads the bilayer. Topologically, residues 218-331 (KETGITVFGV…LLTLRPFLKR (114 aa)) are extracellular. The interval 245 to 285 (NGAVCQHSSGQPGSPQPSSQQAHPHRESRKQRFPHKDSWGG) is disordered. The span at 250-266 (QHSSGQPGSPQPSSQQA) shows a compositional bias: low complexity. A helical transmembrane segment spans residues 332-352 (AILVISYVTVILYFRLWIMGG). At 353–373 (TMPLFSEQDNPASFSPYILTR) the chain is on the cytoplasmic side. A helical transmembrane segment spans residues 374–394 (FLTYSYLLAFNVWLLLAPITL). The Extracellular portion of the chain corresponds to 395 to 414 (CYDWQVGSIPLVETIWDVRN). A helical membrane pass occupies residues 415-435 (LATILLAVVMALLSLHCVAAF). Topologically, residues 436–441 (KRLEHK) are cytoplasmic. A helical membrane pass occupies residues 442-462 (EVLAGLLFLVFPFIPASNLFF). A topological domain (extracellular) is located at residue arginine 463. The helical transmembrane segment at 464–484 (VGFVVAERVLYMPSMGYCILF) threads the bilayer. The Cytoplasmic segment spans residues 485–498 (VHGLSKLCAGLSRC). The chain crosses the membrane as a helical span at residues 499-519 (GATSLMASTVLLLLLFSWKTV). Residues 520-942 (KQNEIWLSRE…LQEVRERDQT (423 aa)) lie on the Extracellular side of the membrane. TPR repeat units lie at residues 543–576 (AKVHYNYANFLKDQGRNKEAIYHYRTALKLYPRH), 577–607 (ASALNNLGTLTKDMAEAKMYYQKALQLHPQH), 608–641 (NRALFNLGNLLKSQEKTEEAIMLLKESIKYGPDF), 642–675 (ADAYSSLASLLAEQERFKEAEDIYQAGIKNCPDS), 676–709 (SDLHNNYAVFLVDSGFPEKAVAHYQQAIQLSPSH), 710–742 (HVAVVNLGRLYRSLGENSKAEEWYRRALKVART), 743–776 (AEVLSPLGALYYNTGRHKEALEVYREAVSLQPSQ), 777–810 (RELRLALAQVLAVMGQTKEAEKITSHIVSEEPRC), 811–844 (LECYRLLSAIHSKQEHHGKALEAIEKALQLKPKD), 849–882 (SELFFTKGNQLREQNLLDKAFESYEAAVTLDPDQ), and 883–916 (AQAWMNMGGIRHIQGSYVSARAYYERALKLVPDS).

Belongs to the TMTC family. In terms of assembly, may interact with FAM168B.

The protein localises to the membrane. It is found in the endoplasmic reticulum. The catalysed reaction is a di-trans,poly-cis-dolichyl beta-D-mannosyl phosphate + L-seryl-[protein] = 3-O-(alpha-D-mannosyl)-L-seryl-[protein] + a di-trans,poly-cis-dolichyl phosphate + H(+). It carries out the reaction a di-trans,poly-cis-dolichyl beta-D-mannosyl phosphate + L-threonyl-[protein] = 3-O-(alpha-D-mannosyl)-L-threonyl-[protein] + a di-trans,poly-cis-dolichyl phosphate + H(+). It participates in protein modification; protein glycosylation. Its function is as follows. Transfers mannosyl residues to the hydroxyl group of serine or threonine residues. The 4 members of the TMTC family are O-mannosyl-transferases dedicated primarily to the cadherin superfamily, each member seems to have a distinct role in decorating the cadherin domains with O-linked mannose glycans at specific regions. Also acts as O-mannosyl-transferase on other proteins such as PDIA3. This chain is Protein O-mannosyl-transferase TMTC1, found in Mus musculus (Mouse).